A 444-amino-acid polypeptide reads, in one-letter code: Cobyrinate a,c-diamide synthase (444 aa).

In terms of domain architecture, GATase cobBQ-type spans 250-438 (IIAIAQDRAF…PHIHFFGSYK (189 aa)). The active-site Nucleophile is C332.

Belongs to the CobB/CbiA family. Requires Mg(2+) as cofactor.

It carries out the reaction cob(II)yrinate + 2 L-glutamine + 2 ATP + 2 H2O = cob(II)yrinate a,c diamide + 2 L-glutamate + 2 ADP + 2 phosphate + 2 H(+). The protein operates within cofactor biosynthesis; adenosylcobalamin biosynthesis; cob(II)yrinate a,c-diamide from sirohydrochlorin (anaerobic route): step 10/10. Functionally, catalyzes the ATP-dependent amidation of the two carboxylate groups at positions a and c of cobyrinate, using either L-glutamine or ammonia as the nitrogen source. The protein is Cobyrinate a,c-diamide synthase of Fusobacterium nucleatum subsp. nucleatum (strain ATCC 25586 / DSM 15643 / BCRC 10681 / CIP 101130 / JCM 8532 / KCTC 2640 / LMG 13131 / VPI 4355).